Here is a 226-residue protein sequence, read N- to C-terminus: Urease accessory protein UreE (226 aa).

The segment at 192 to 226 (PHGSGLHIHSIHSHGDGHSHDHDHSHGDHDSDHKH) is disordered. The span at 204-226 (SHGDGHSHDHDHSHGDHDSDHKH) shows a compositional bias: basic and acidic residues.

The protein belongs to the UreE family.

The protein localises to the cytoplasm. Functionally, involved in urease metallocenter assembly. Binds nickel. Probably functions as a nickel donor during metallocenter assembly. This chain is Urease accessory protein UreE, found in Yersinia intermedia.